A 258-amino-acid polypeptide reads, in one-letter code: Large ribosomal subunit protein uL5c (258 aa).

A chloroplast-targeting transit peptide spans M1 to A38.

Component of the chloroplast large ribosomal subunit (LSU). Mature 70S chloroplast ribosomes of higher plants consist of a small (30S) and a large (50S) subunit. The 30S small subunit contains 1 molecule of ribosomal RNA (16S rRNA) and 24 different proteins. The 50S large subunit contains 3 rRNA molecules (23S, 5S and 4.5S rRNA) and 33 different proteins.

It localises to the plastid. Its subcellular location is the chloroplast. Component of the chloroplast ribosome (chloro-ribosome), a dedicated translation machinery responsible for the synthesis of chloroplast genome-encoded proteins, including proteins of the transcription and translation machinery and components of the photosynthetic apparatus. The polypeptide is Large ribosomal subunit protein uL5c (RPL5) (Spinacia oleracea (Spinach)).